Consider the following 148-residue polypeptide: Large ribosomal subunit protein bL9 (148 aa).

This sequence belongs to the bacterial ribosomal protein bL9 family.

In terms of biological role, binds to the 23S rRNA. The sequence is that of Large ribosomal subunit protein bL9 from Chloroflexus aurantiacus (strain ATCC 29366 / DSM 635 / J-10-fl).